A 486-amino-acid chain; its full sequence is Ribulose bisphosphate carboxylase large chain (486 aa).

Asparagine 125 and threonine 175 together coordinate substrate. Lysine 177 functions as the Proton acceptor in the catalytic mechanism. Lysine 179 contacts substrate. Mg(2+) is bound by residues lysine 203, aspartate 205, and glutamate 206. Lysine 203 carries the N6-carboxylysine modification. The Proton acceptor role is filled by histidine 295. Arginine 296, histidine 328, and serine 380 together coordinate substrate.

Belongs to the RuBisCO large chain family. Type I subfamily. Heterohexadecamer of 8 large chains and 8 small chains. Requires Mg(2+) as cofactor.

It carries out the reaction 2 (2R)-3-phosphoglycerate + 2 H(+) = D-ribulose 1,5-bisphosphate + CO2 + H2O. It catalyses the reaction D-ribulose 1,5-bisphosphate + O2 = 2-phosphoglycolate + (2R)-3-phosphoglycerate + 2 H(+). RuBisCO catalyzes two reactions: the carboxylation of D-ribulose 1,5-bisphosphate, the primary event in carbon dioxide fixation, as well as the oxidative fragmentation of the pentose substrate. Both reactions occur simultaneously and in competition at the same active site. This Afipia carboxidovorans (strain ATCC 49405 / DSM 1227 / KCTC 32145 / OM5) (Oligotropha carboxidovorans) protein is Ribulose bisphosphate carboxylase large chain.